Here is a 318-residue protein sequence, read N- to C-terminus: Pseudouridine-5'-phosphate glycosidase 1 (318 aa).

Glu29 acts as the Proton donor in catalysis. Residues Lys90 and Val110 each coordinate substrate. Asp142 contributes to the Mn(2+) binding site. A substrate-binding site is contributed by 144-146 (SAD). Lys163 serves as the catalytic Nucleophile.

Belongs to the pseudouridine-5'-phosphate glycosidase family. As to quaternary structure, homotrimer. It depends on Mn(2+) as a cofactor.

It catalyses the reaction D-ribose 5-phosphate + uracil = psi-UMP + H2O. Functionally, catalyzes the reversible cleavage of pseudouridine 5'-phosphate (PsiMP) to ribose 5-phosphate and uracil. Functions biologically in the cleavage direction, as part of a pseudouridine degradation pathway. The protein is Pseudouridine-5'-phosphate glycosidase 1 of Photorhabdus laumondii subsp. laumondii (strain DSM 15139 / CIP 105565 / TT01) (Photorhabdus luminescens subsp. laumondii).